The chain runs to 206 residues: Small ribosomal subunit protein uS4 (206 aa).

Positions 96–156 constitute an S4 RNA-binding domain; the sequence is RRLDNVVYRM…EKSKNQLRIK (61 aa).

This sequence belongs to the universal ribosomal protein uS4 family. In terms of assembly, part of the 30S ribosomal subunit. Contacts protein S5. The interaction surface between S4 and S5 is involved in control of translational fidelity.

Functionally, one of the primary rRNA binding proteins, it binds directly to 16S rRNA where it nucleates assembly of the body of the 30S subunit. Its function is as follows. With S5 and S12 plays an important role in translational accuracy. This Hahella chejuensis (strain KCTC 2396) protein is Small ribosomal subunit protein uS4.